A 434-amino-acid chain; its full sequence is F-box/FBD/LRR-repeat protein At3g26920 (434 aa).

Residues 16–65 (EDRISQLPEALLLQILSLLPTKEVVAVSVLAKRWRFLWKMVPSLEFFYYF) enclose the F-box domain. LRR repeat units follow at residues 69–95 (LERF…HLNM), 100–125 (DPRI…VLKV), 145–172 (TLEL…NLHE), 173–198 (VEFV…VIHQ), 219–244 (VIVE…KIEG), 265–290 (IIDV…SLKV), and 315–341 (TYKP…KIFD). An FBD domain is found at 353-403 (KWNEPKNVPECLLLHLETFVWTCYEGKLENEIELAKYILRNARRLKKATFS).

The polypeptide is F-box/FBD/LRR-repeat protein At3g26920 (Arabidopsis thaliana (Mouse-ear cress)).